The following is a 1157-amino-acid chain: DNA-directed RNA polymerase subunit beta (1157 aa).

Belongs to the RNA polymerase beta chain family. The RNAP catalytic core consists of 2 alpha, 1 beta, 1 beta' and 1 omega subunit. When a sigma factor is associated with the core the holoenzyme is formed, which can initiate transcription.

The enzyme catalyses RNA(n) + a ribonucleoside 5'-triphosphate = RNA(n+1) + diphosphate. Functionally, DNA-dependent RNA polymerase catalyzes the transcription of DNA into RNA using the four ribonucleoside triphosphates as substrates. This Tropheryma whipplei (Whipple's bacillus) protein is DNA-directed RNA polymerase subunit beta.